The primary structure comprises 628 residues: ATP-dependent zinc metalloprotease FtsH (628 aa).

Over 1–7 (MKLSWKT) the chain is Stromal. The chain crosses the membrane as a helical span at residues 8 to 28 (LLLWSLPIFVVGFFFWQGFLG). At 29–118 (PTTTDVGSNI…AHPPKSTSAV (90 aa)) the chain is on the lumenal side. A helical membrane pass occupies residues 119-139 (WGLLGNLLFPLILVGGLAFLF). The Stromal segment spans residues 140-628 (RRSNNASGGP…PEKNYYISQF (489 aa)). 213–220 (GPPGTGKT) is a binding site for ATP. Histidine 434 contributes to the Zn(2+) binding site. Glutamate 435 is a catalytic residue. 2 residues coordinate Zn(2+): histidine 438 and aspartate 512.

This sequence in the central section; belongs to the AAA ATPase family. In the C-terminal section; belongs to the peptidase M41 family. Homohexamer. It depends on Zn(2+) as a cofactor.

It is found in the plastid. The protein localises to the chloroplast thylakoid membrane. Acts as a processive, ATP-dependent zinc metallopeptidase. The polypeptide is ATP-dependent zinc metalloprotease FtsH (Porphyra purpurea (Red seaweed)).